A 134-amino-acid chain; its full sequence is Small ribosomal subunit protein uS8c (134 aa).

This sequence belongs to the universal ribosomal protein uS8 family. As to quaternary structure, part of the 30S ribosomal subunit.

The protein resides in the plastid. In terms of biological role, one of the primary rRNA binding proteins, it binds directly to 16S rRNA central domain where it helps coordinate assembly of the platform of the 30S subunit. The chain is Small ribosomal subunit protein uS8c (rps8) from Cuscuta reflexa (Southern Asian dodder).